The chain runs to 541 residues: Glutamyl-tRNA(Gln) amidotransferase subunit A, chloroplastic/mitochondrial (541 aa).

Residues Lys121 and Ser196 each act as charge relay system in the active site. The active-site Acyl-ester intermediate is the Ser220.

This sequence belongs to the amidase family. GatA subfamily. In terms of assembly, subunit of the heterotrimeric GatCAB amidotransferase (AdT) complex, composed of A, B and C subunits.

Its subcellular location is the mitochondrion. The protein resides in the plastid. It is found in the chloroplast stroma. It carries out the reaction L-glutamyl-tRNA(Gln) + L-glutamine + ATP + H2O = L-glutaminyl-tRNA(Gln) + L-glutamate + ADP + phosphate + H(+). Its function is as follows. Allows the formation of correctly charged Gln-tRNA(Gln) through the transamidation of misacylated Glu-tRNA(Gln) in chloroplasts and mitochondria. The reaction takes place in the presence of glutamine and ATP through an activated gamma-phospho-Glu-tRNA(Gln). The sequence is that of Glutamyl-tRNA(Gln) amidotransferase subunit A, chloroplastic/mitochondrial from Sorghum bicolor (Sorghum).